A 334-amino-acid chain; its full sequence is Phosphate acyltransferase (334 aa).

This sequence belongs to the PlsX family. As to quaternary structure, homodimer. Probably interacts with PlsY.

Its subcellular location is the cytoplasm. It catalyses the reaction a fatty acyl-[ACP] + phosphate = an acyl phosphate + holo-[ACP]. It participates in lipid metabolism; phospholipid metabolism. Catalyzes the reversible formation of acyl-phosphate (acyl-PO(4)) from acyl-[acyl-carrier-protein] (acyl-ACP). This enzyme utilizes acyl-ACP as fatty acyl donor, but not acyl-CoA. In Acholeplasma laidlawii (strain PG-8A), this protein is Phosphate acyltransferase.